The primary structure comprises 297 residues: Guanylate kinase (297 aa).

The Guanylate kinase-like domain occupies 4–183 (GKMIIISGPS…AVAKITDVLH (180 aa)). Residue 11-18 (GPSGVGKG) participates in ATP binding. Positions 204–297 (EQIVKEKYMY…EQKHYNNDEF (94 aa)) are unknown.

This sequence belongs to the guanylate kinase family.

Its subcellular location is the cytoplasm. The enzyme catalyses GMP + ATP = GDP + ADP. Its function is as follows. Essential for recycling GMP and indirectly, cGMP. This is Guanylate kinase (gmk) from Mycoplasma capricolum subsp. capricolum (strain California kid / ATCC 27343 / NCTC 10154).